Here is a 298-residue protein sequence, read N- to C-terminus: Tyrosine recombinase XerC (298 aa).

A Core-binding (CB) domain is found at 1–84 (MNHIQEAFLN…TLRTLYEYWM (84 aa)). The region spanning 105–286 (YLPQFSLEEE…SNQQLRKVYL (182 aa)) is the Tyr recombinase domain. Active-site residues include Arg145, Lys169, His238, Arg241, and His264. Tyr273 (O-(3'-phospho-DNA)-tyrosine intermediate) is an active-site residue.

This sequence belongs to the 'phage' integrase family. XerC subfamily. Forms a cyclic heterotetrameric complex composed of two molecules of XerC and two molecules of XerD.

The protein resides in the cytoplasm. Functionally, site-specific tyrosine recombinase, which acts by catalyzing the cutting and rejoining of the recombining DNA molecules. The XerC-XerD complex is essential to convert dimers of the bacterial chromosome into monomers to permit their segregation at cell division. It also contributes to the segregational stability of plasmids. This Staphylococcus aureus protein is Tyrosine recombinase XerC.